A 308-amino-acid chain; its full sequence is CASP-like protein 4A2 (308 aa).

Residues 1–135 are disordered; it reads MALEAQPSPS…APAPAPRVPA (135 aa). Topologically, residues 1 to 161 are cytoplasmic; sequence MALEAQPSPS…KRPTAVLQRT (161 aa). Gly residues predominate over residues 22–31; the sequence is GGAGAPGGSA. Low complexity predominate over residues 32-44; the sequence is GDADAQARRATSG. Composition is skewed to pro residues over residues 54 to 65 and 89 to 132; these read RRSPPPPFPRTP and FQPP…PAPR. The helical transmembrane segment at 162–182 threads the bilayer; that stretch reads ALVARVAAALLCLAALAVLAA. At 183–203 the chain is on the extracellular side; the sequence is DSRKGFALDSYSNYSQLRYSE. Residue Asn195 is glycosylated (N-linked (GlcNAc...) asparagine). Residues 204-224 traverse the membrane as a helical segment; sequence AVNVIGFVYSVLQFFVLADLM. The Cytoplasmic segment spans residues 225 to 240; the sequence is RRNKHLNPRRKGDYFD. Residues 241–262 traverse the membrane as a helical segment; that stretch reads FFMDQVLAYLLISSSSSATARV. Residues 263–280 lie on the Extracellular side of the membrane; that stretch reads GDWIDNWGSDPFPKMANS. Residue Asn279 is glycosylated (N-linked (GlcNAc...) asparagine). The chain crosses the membrane as a helical span at residues 281-301; that stretch reads SIAISFMAFLVFAISALISAY. At 302–308 the chain is on the cytoplasmic side; it reads NLFRRDI.

This sequence belongs to the Casparian strip membrane proteins (CASP) family. As to quaternary structure, homodimer and heterodimers.

Its subcellular location is the cell membrane. This Oryza sativa subsp. japonica (Rice) protein is CASP-like protein 4A2.